Consider the following 618-residue polypeptide: Probable peptide transporter ptr2 (618 aa).

Serine 22 is subject to Phosphoserine. The residue at position 23 (tyrosine 23) is a Phosphotyrosine. Phosphoserine occurs at positions 25 and 33. Residues 26–50 (KEKKADGSATINTADEQSSTDELQK) are disordered. The segment covering 34–50 (ATINTADEQSSTDELQK) has biased composition (polar residues). Threonine 35 bears the Phosphothreonine mark. At serine 44 the chain carries Phosphoserine. Threonine 45 is modified (phosphothreonine). Phosphoserine occurs at positions 51 and 53. Threonine 54 is modified (phosphothreonine). A run of 10 helical transmembrane segments spans residues 131 to 151 (GLSN…ALIA), 161 to 181 (IVCS…TAIP), 187 to 207 (GKSM…TGGI), 247 to 267 (YMIF…TTSL), 273 to 293 (FVYA…ILAV), 400 to 420 (FDSI…YPLL), 430 to 450 (ILRI…AAVL), 475 to 495 (VWIQ…ASIT), 510 to 530 (SIIT…SICI), and 541 to 561 (WMYT…WVCF). Serine 594 bears the Phosphoserine mark. Threonine 618 bears the Phosphothreonine mark.

The protein belongs to the major facilitator superfamily. Proton-dependent oligopeptide transporter (POT/PTR) (TC 2.A.17) family.

It is found in the membrane. In terms of biological role, uptake of small peptides. The polypeptide is Probable peptide transporter ptr2 (ptr2) (Schizosaccharomyces pombe (strain 972 / ATCC 24843) (Fission yeast)).